A 164-amino-acid chain; its full sequence is MKSVITTTISAADAAGRFPSSSDLESIQGNIQRAAARLEAAQKLSGNHEAVVKEAGDACFAKYSYLKNAGEAGDSPEKINKCYRDIDHYMRLINYSLVVGGTGPVDEWGIAGSREVYRALNLPGSAYIAAFTFTRDRLCVPRDMSSQAGVEFTSALDYVINSLC.

Residues asparagine 47, lysine 81, cysteine 82, arginine 84, histidine 88, arginine 137, cysteine 139, and arginine 142 each contribute to the (2R,3E)-phycoerythrobilin site.

The protein belongs to the phycobiliprotein family. Heterododecamer of 6 alpha and 6 beta chains. The basic functional unit of phycobiliproteins is a ring-shaped hexamer formed from two back-to-back trimers contacting via the alpha chain subunits. The trimers are composed of alpha/beta subunit heterodimers arranged around a three-fold axis of symmetry. The phycoerythrins also contain a gamma subunit which is located in the center of the hexamer. In terms of processing, contains two covalently linked phycoerythrobilin chromophores.

Its subcellular location is the plastid. The protein localises to the chloroplast thylakoid membrane. In terms of biological role, light-harvesting photosynthetic tetrapyrrole chromophore-protein from the phycobiliprotein complex. The chain is R-phycoerythrin alpha chain (cpeA) from Griffithsia monilis (Red alga).